Here is a 274-residue protein sequence, read N- to C-terminus: Large ribosomal subunit protein uL2 (274 aa).

2 disordered regions span residues 28–54 (APHA…TRHI) and 224–274 (VAMN…RRRK). Residues 263–274 (KRTDKMIVRRRK) are compositionally biased toward basic and acidic residues.

The protein belongs to the universal ribosomal protein uL2 family. As to quaternary structure, part of the 50S ribosomal subunit. Forms a bridge to the 30S subunit in the 70S ribosome.

In terms of biological role, one of the primary rRNA binding proteins. Required for association of the 30S and 50S subunits to form the 70S ribosome, for tRNA binding and peptide bond formation. It has been suggested to have peptidyltransferase activity; this is somewhat controversial. Makes several contacts with the 16S rRNA in the 70S ribosome. In Pseudomonas fluorescens (strain SBW25), this protein is Large ribosomal subunit protein uL2.